The sequence spans 290 residues: Syntaxin-2 (290 aa).

The Cytoplasmic segment spans residues 1-266 (MRDRLPDLTA…KYQSKARRKK (266 aa)). S14 is subject to Phosphoserine. The stretch at 69-106 (EGKIKEELEDLNKEIKKTANRIRGKLKAIEQSCDQDEN) forms a coiled coil. In terms of domain architecture, t-SNARE coiled-coil homology spans 193 to 255 (LNEIESRHKD…EHAKEETKKA (63 aa)). A helical; Anchor for type IV membrane protein transmembrane segment spans residues 267-290 (WIIAAVVVAVIAVLALIIGLTVGK).

This sequence belongs to the syntaxin family. In terms of assembly, interacts with SYT6 and SYT8; the interaction is Ca(2+)-dependent. In terms of tissue distribution, heart, spleen, liver, and testis.

It is found in the membrane. In terms of biological role, essential for epithelial morphogenesis. May mediate Ca(2+)-regulation of exocytosis acrosomal reaction in sperm. The protein is Syntaxin-2 (Stx2) of Rattus norvegicus (Rat).